The following is an 89-amino-acid chain: Small ribosomal subunit protein uS15 (89 aa).

Belongs to the universal ribosomal protein uS15 family. In terms of assembly, part of the 30S ribosomal subunit. Forms a bridge to the 50S subunit in the 70S ribosome, contacting the 23S rRNA.

One of the primary rRNA binding proteins, it binds directly to 16S rRNA where it helps nucleate assembly of the platform of the 30S subunit by binding and bridging several RNA helices of the 16S rRNA. Its function is as follows. Forms an intersubunit bridge (bridge B4) with the 23S rRNA of the 50S subunit in the ribosome. The chain is Small ribosomal subunit protein uS15 from Streptococcus pyogenes serotype M2 (strain MGAS10270).